An 806-amino-acid chain; its full sequence is Mitogen-activated protein kinase 7 (806 aa).

The interval 1-23 (MAEPLKEEDGEDGSGEPPGRVKA) is disordered. At Ala2 the chain carries N-acetylalanine. A required for cytoplasmic targeting region spans residues 2–77 (AEPLKEEDGE…VVSSARRRLT (76 aa)). Residues 55 to 347 (YEIIETIGNG…AAAALRHPFL (293 aa)) enclose the Protein kinase domain. ATP is bound by residues 61–69 (IGNGAYGVV) and Lys84. The interval 78-139 (GQQVAIKKIP…FRSVYVVLDL (62 aa)) is required for binding to MAP2K5. The interval 140–406 (MESDLHQIIH…QQIRFQPSLQ (267 aa)) is necessary for oligomerization. Asp182 acts as the Proton acceptor in catalysis. The TXY signature appears at 219–221 (TEY). The segment at 407–806 (PVASEPVCPD…LSDLPDLQEP (400 aa)) is may not be required for kinase activity; required to stimulate MEF2C activity. Disordered regions lie at residues 424–475 (APSG…SDNT) and 488–727 (RSRL…PKGS). A compositionally biased stretch (pro residues) spans 433 to 443 (SPPPALPPCSG). 3 stretches are compositionally biased toward basic and acidic residues: residues 502 to 519 (PEPR…EREE), 527 to 544 (RAKE…KERG), and 563 to 573 (DNDRSLLERWT). The Nuclear localization signal motif lies at 505-539 (RKPVTAQERQREREEKRRRRQERAKEREKRRQERE). 2 stretches are compositionally biased toward pro residues: residues 578–592 (PPVP…PTPK) and 627–643 (VCPP…PVPA). The segment covering 647–660 (TAPSTSLLASQSLV) has biased composition (polar residues). Residues 678–689 (PSGPPPPDPGLT) show a composition bias toward pro residues. Positions 693–710 (STSESPDVNLVTQQLSKS) are enriched in polar residues. Ser710 bears the Phosphoserine mark. Position 723 is a phosphothreonine (Thr723).

Belongs to the protein kinase superfamily. CMGC Ser/Thr protein kinase family. MAP kinase subfamily. In terms of assembly, interacts with MAP2K5. Forms oligomers. Interacts with MEF2A, MEF2C and MEF2D; the interaction phosphorylates the MEF2s and enhances transcriptional activity of MEF2A, MEF2C but not MEF2D. Interacts with SGK1. Interacts with PML. Interacts (via N-terminal half) with HSP90AB1-CDC37 chaperone complex in resting cells; the interaction is MAP2K5-independent and prevents MAPK7 from ubiquitination and proteasomal degradation. Interacts with STUB1/CHIP; the interaction is enhanced in the presence of IGF1 or MAP2K5 and promotes STUB1/CHIP E3 ligase activity. Requires Mg(2+) as cofactor. In terms of processing, dually phosphorylated on Thr-219 and Tyr-221, which activates the enzyme.

It is found in the cytoplasm. The protein localises to the nucleus. Its subcellular location is the PML body. The catalysed reaction is L-seryl-[protein] + ATP = O-phospho-L-seryl-[protein] + ADP + H(+). The enzyme catalyses L-threonyl-[protein] + ATP = O-phospho-L-threonyl-[protein] + ADP + H(+). With respect to regulation, activated by tyrosine and threonine phosphorylation. Activated in response to hyperosmolarity, hydrogen peroxide, and epidermal growth factor (EGF). Its function is as follows. Plays a role in various cellular processes such as proliferation, differentiation and cell survival. The upstream activator of MAPK7 is the MAPK kinase MAP2K5. Upon activation, it translocates to the nucleus and phosphorylates various downstream targets including MEF2C. EGF activates MAPK7 through a Ras-independent and MAP2K5-dependent pathway. As part of the MAPK/ERK signaling pathway, acts as a negative regulator of apoptosis in cardiomyocytes via interaction with STUB1/CHIP and promotion of STUB1-mediated ubiquitination and degradation of ICER-type isoforms of CREM. May have a role in muscle cell differentiation. May be important for endothelial function and maintenance of blood vessel integrity. MAP2K5 and MAPK7 interact specifically with one another and not with MEK1/ERK1 or MEK2/ERK2 pathways. Phosphorylates SGK1 at Ser-78 and this is required for growth factor-induced cell cycle progression. Involved in the regulation of p53/TP53 by disrupting the PML-MDM2 interaction. This chain is Mitogen-activated protein kinase 7 (Mapk7), found in Rattus norvegicus (Rat).